The following is a 2655-amino-acid chain: MIESQREFNCIGGDNQNGVAVIGVGFKIPLDLENCLSSPSELYSALFNEFDSVTKNTSSRWSDNYFKNGDIVSLSAGLLPLREIKSFDPTFFGINPSDADLIDPQQRLLLKCVWNALEDGGIDPISIRSSDTSVYIGCSTIDYFLLNRNPVDPHNHGIQTASYSIPNRISYCFDFRGESLFVDTACSSSLNAVHLGYNSIINLKSKLSIVGGSNLILDPQNSIFFSKQQVNGPSGKCNSFSEEADGFVRSETVGVVVLKNLKDAIKDGDRIYCVIQGSNSNVDGNYEKLNYISPSKLSQAENITKALKSTNGAVNASDIDYFECHGTGTPTGDPIELEGISIALNRTQQSTTLSNPLLIGSIKSNIGHGEASSGIASLIKCCVMFKYRQFLPNINFKTPNPLIKFKEWNLKVVTEPVPFNNNKQTIMAINNFGVSGSNCCIILSEYKSNNNNNNDFKATTHLKSKKFIIPFSSNSSTSLDNYKSLLSNETNNFQDFVIKQINNKSTSLIQRSVIIASNWSEFNESSNEIQSNIKKSIISNITIKKKNAVTVFVFCGQGSQYNKMALSLYENEHIFKSTMDKLDKELSKHYGYSILEKLRSITDEDLVTIHQPILAIPVNVMVQVSLYELYKHWGIKSDIMVGHSFGEIACSYCSGMVDFKTLCYLTYHRSVAQNKTIGSGKMLSINIGAKEYLDSYSTKYPSVEIACYNSETSIVIAGNEELLNEISKDLKSKDIFTAMLPSLSAFHTTHQSVIKDDICSLNFKSTLSKITVFSTVTSNQFGINNNNNNNNNQLNSNYLFQNVIQPVKFSETISNIYKYIESNDMGNEITFIEIAPHPTLQYYLNQMKSQQSEYFNNGEKISIYSACNKKKNDYNEFLKTISTLFVNGYNNINFKSQIINNNNNDNNNNFNLPLYQWDDNEYYKIHPTWKKANKNGPSINHLGNLNDSSIKSFKTYINTRKPQFQWLKGHSLKGKVVFPGMGYISNLLSVYNMNQDITINEIQFKSAFILVDGVNNCLETSIVPLTKNEFNIKFHFKDLKTNKWVLCANANYSLFKHNDNNDKLDIEKLKSNCNYTIISKDELYNNIRAKSGLIYKGLFQGVKEAFIGNRCSLTVLSLNEIENQQEFKHLLENRNFNSLFNTAILDSCLHGSLHSKEQSQIYFDKCEGFKYYSNNINLATSKRNEYKEINVYIETNPVINSTVIVSLKIMLPDGTLLIEIQKVVCKSSIPIIDSTSVIQPSPKDLHTPYYQPKNSLIKPPQSFKHLHCMKEFASIESDNREMVYMSIYHLIFKAINARSPTKINLESLENLTLDQFKELIKDSAANIQRSNQFIYECLKLYHTNHSNYKKNQIKDFIKECEDFNGYNQIIFKTIKIYAKSLFPLPDDDPFTDTIQSLFEDDQLENVYIHLKHLYPVNNLLSEIVFQSIKPIINQTSTFRILEIGAGYGTISQLIFDKLEQLLADNFTSSRIDIEYTFTDISNTFLPRAKERYSKYKRFNIIYKLLDLELPLTEGIQDFRPLYYDIVVMSNVLHVVKDINFSTNEIYKVLKQNGQLIFVEPTYKNLYLDTIFGIFPQWWSFNDDIRTDRCCLEPSKWFEFLETINFKDTIILGQDNKEILKNVENSIILVQTRKPSQLELSINNSPSTNQFKSFENIILYTDDNQQPNDCSEIIDLLKSLELPIKIINNIDQFNQIIKTQYNNNNNNNNNNNNNNNNNNNNTNNNLIIFLKSVNQLNTNNYKDITFEYVQINQILVKLELEENYKLLLITNNSQSSNYLSNSLIGTSRYLFADIVSSKLDIITIDFDTVSIKNHQNVISVINHLLDSKDNSEREYYIINNEINIERYKNESNIKHQLKSKTFQENKDELMVQLDSNLEYRLKSKSKQELKSTHVEIQVKAIGINYKDYATYSGLIDSIIEIDKDKEKDENYDQNYPSIGNDFSGVITRIGSDVRKFKVGDEVCGLAPKTSASHIITEEGYLCKKPSNISHSEAASSVTVYTTSFQSIYSIGDLKKNETILIHSGSGGIGLSALEILKWKNHQGYIFATVGSEDKVKYLTDTYGSFITGIYSSRDKDYQDQIKEKLKSLGCDIDHQGVDLILNTLSVEYMDSNFKCLNQKGRCIDLSITHLTPFDYMDYNKFKFNVSYGNIELVVLPSKIIKDHLKKMLKAFSLGSLRFIPIVEFSNLNIRNAVEYINQRKHIGKIVVKNDVDFINKLFIEQQQQQNSVENNEILMKDKYDISNLELGKNILLTGQTGIILTILKWLYKHSNNSIENIIIISKSKLKWELELFINESTNNRIKIHYKQADVGNNNELNQCFEELRLRHSIEDINSIFHFAFINDIGQFEDVNMNRMDIAHHAKAIGSLNLHNQSIERKWNIKQFVLASSALSVFGGDNQCCYISACSVLDSLSKYRKSIGLPSLSINFGGVTSTGFVSRSGAVEANLESSIINLITPQSLISSLDLFIQNSQTFSNYTHFNFIYDNIESYSLNRMLFKFDYLINQHSSLVSNKRLGGINENNNIGDLLVSKIGELLSIEPSKLNLDFRLVDYGLDSLVIVQLKNFIDKQFQPHLISILQLQNNKISTTIEIIIKGYNNNQNKKIKNEQSNDIPSVVQKETIKDNNENKDDIKIDMDDKKENLKGKKENIDDKKENNN.

One can recognise a Ketosynthase family 3 (KS3) domain in the interval 16–445 (QNGVAVIGVG…GSNCCIILSE (430 aa)). Active-site for beta-ketoacyl synthase activity residues include Cys186, His325, and His368. An acyl/malonyl transferase region spans residues 634-667 (GIKSDIMVGHSFGEIACSYCSGMVDFKTLCYLTY). The For acyl/malonyl transferase activity role is filled by Ser644. The interval 926 to 1059 (HPTWKKANKN…ANYSLFKHND (134 aa)) is N-terminal hotdog fold. The 309-residue stretch at 926–1234 (HPTWKKANKN…CKSSIPIIDS (309 aa)) folds into the PKS/mFAS DH domain. Catalysis depends on His970, which acts as the Proton acceptor; for dehydratase activity. The C-terminal hotdog fold stretch occupies residues 1074–1234 (NYTIISKDEL…CKSSIPIIDS (161 aa)). Asp1146 serves as the catalytic Proton donor; for dehydratase activity. Residues 1700 to 1719 (YNNNNNNNNNNNNNNNNNNN) are disordered. Positions 2517-2594 (NENNNIGDLL…TTIEIIIKGY (78 aa)) constitute a Carrier domain. Residue Ser2554 is modified to O-(pantetheine 4'-phosphoryl)serine. The tract at residues 2612 to 2655 (SVVQKETIKDNNENKDDIKIDMDDKKENLKGKKENIDDKKENNN) is disordered. Residues 2617 to 2655 (ETIKDNNENKDDIKIDMDDKKENLKGKKENIDDKKENNN) are compositionally biased toward basic and acidic residues. The stretch at 2618–2655 (TIKDNNENKDDIKIDMDDKKENLKGKKENIDDKKENNN) forms a coiled coil.

Requires pantetheine 4'-phosphate as cofactor.

Its function is as follows. Probable polyketide synthase. The chain is Probable polyketide synthase 42 (pks42) from Dictyostelium discoideum (Social amoeba).